Consider the following 212-residue polypeptide: MKNVKIALTKGRLEKKAIEIFKTININTRELEDKGRKLIFNCENEEYNIELFLVKAKDVETYVEYGAADIGIVGKDTLMETNKEFYEVLDLNVGKCKFALAALPSFKLDQGYNRKKIATKYPNIAREYFRKKGMDVELIKIEGSVELGPIVGLADAIVDIVETGNTLRENGLVVVEDICEISARMIVNKASMKTKKDEIIKIIENVSEVIRQ.

Belongs to the ATP phosphoribosyltransferase family. Short subfamily. In terms of assembly, heteromultimer composed of HisG and HisZ subunits.

Its subcellular location is the cytoplasm. It carries out the reaction 1-(5-phospho-beta-D-ribosyl)-ATP + diphosphate = 5-phospho-alpha-D-ribose 1-diphosphate + ATP. The protein operates within amino-acid biosynthesis; L-histidine biosynthesis; L-histidine from 5-phospho-alpha-D-ribose 1-diphosphate: step 1/9. Catalyzes the condensation of ATP and 5-phosphoribose 1-diphosphate to form N'-(5'-phosphoribosyl)-ATP (PR-ATP). Has a crucial role in the pathway because the rate of histidine biosynthesis seems to be controlled primarily by regulation of HisG enzymatic activity. The protein is ATP phosphoribosyltransferase of Clostridium botulinum (strain ATCC 19397 / Type A).